A 137-amino-acid polypeptide reads, in one-letter code: Large ribosomal subunit protein uL16 (137 aa).

Basic residues predominate over residues 1–16; the sequence is MLQPKRTKFRKVHTGR. The segment at 1 to 22 is disordered; it reads MLQPKRTKFRKVHTGRNRGLAQ.

This sequence belongs to the universal ribosomal protein uL16 family. Part of the 50S ribosomal subunit.

In terms of biological role, binds 23S rRNA and is also seen to make contacts with the A and possibly P site tRNAs. The chain is Large ribosomal subunit protein uL16 from Idiomarina loihiensis (strain ATCC BAA-735 / DSM 15497 / L2-TR).